The primary structure comprises 204 residues: Tumor necrosis factor alpha-induced protein 8-like protein 3 (204 aa).

Acidic residues predominate over residues 1 to 10; it reads MDSDSGEQSE. A disordered region spans residues 1-20; that stretch reads MDSDSGEQSEGEPGTAAGPH. A binding to phosphoinositides region spans residues 21–204; sequence VFSSKNLALQ…INKLLDDKIL (184 aa).

The protein belongs to the TNFAIP8 family. In terms of tissue distribution, widely expressed (at protein level).

It localises to the cytoplasm. The protein resides in the cell membrane. Its function is as follows. Acts as a lipid transfer protein. Preferentially captures and shuttles two lipid second messengers, i.e., phosphatidylinositol 4,5- bisphosphate and phosphatidylinositol 3,4,5-trisphosphate and increases their levels in the plasma membrane. Additionally, may also function as a lipid-presenting protein to enhance the activity of the PI3K-AKT and MEK-ERK pathways. May act as a regulator of tumorigenesis through its activation of phospholipid signaling. The polypeptide is Tumor necrosis factor alpha-induced protein 8-like protein 3 (Tnfaip8l3) (Mus musculus (Mouse)).